The sequence spans 115 residues: NADH-ubiquinone oxidoreductase chain 3 (115 aa).

Helical transmembrane passes span I3–W23, F55–L75, and M87–L107.

This sequence belongs to the complex I subunit 3 family. Core subunit of respiratory chain NADH dehydrogenase (Complex I) which is composed of 45 different subunits. Interacts with TMEM186. Interacts with TMEM242.

Its subcellular location is the mitochondrion inner membrane. The enzyme catalyses a ubiquinone + NADH + 5 H(+)(in) = a ubiquinol + NAD(+) + 4 H(+)(out). Functionally, core subunit of the mitochondrial membrane respiratory chain NADH dehydrogenase (Complex I) which catalyzes electron transfer from NADH through the respiratory chain, using ubiquinone as an electron acceptor. Essential for the catalytic activity of complex I. The polypeptide is NADH-ubiquinone oxidoreductase chain 3 (Dasypus novemcinctus (Nine-banded armadillo)).